The chain runs to 256 residues: Hydroxyacylglutathione hydrolase (256 aa).

Residues histidine 56, histidine 58, aspartate 60, histidine 61, histidine 114, aspartate 133, and histidine 171 each coordinate Zn(2+).

It belongs to the metallo-beta-lactamase superfamily. Glyoxalase II family. As to quaternary structure, monomer. It depends on Zn(2+) as a cofactor.

It catalyses the reaction an S-(2-hydroxyacyl)glutathione + H2O = a 2-hydroxy carboxylate + glutathione + H(+). It functions in the pathway secondary metabolite metabolism; methylglyoxal degradation; (R)-lactate from methylglyoxal: step 2/2. In terms of biological role, thiolesterase that catalyzes the hydrolysis of S-D-lactoyl-glutathione to form glutathione and D-lactic acid. This is Hydroxyacylglutathione hydrolase from Rhodobacter capsulatus (Rhodopseudomonas capsulata).